A 215-amino-acid chain; its full sequence is MGKMNHQDELPLAKVSEVDEAKRQWLQGMRHPVDTVTEPEPAEILAEFIRQHSAAGQLVARAVFLSPPYLVAEEELSVLLESIKQNGDYADIACLTGSKDDYYYSTQAMSENYAAMSLQVVEQDICRAIAHAVRFECQTYPRPYKVAMLMQAPYYFQEAQIEAAIAAMDVAPEYADIRQVESSTAVLYLFSERFMTYGKAYGLCEWFEVEQFQNP.

This is an uncharacterized protein from Escherichia coli (strain K12).